A 323-amino-acid polypeptide reads, in one-letter code: D-alanine--D-alanine ligase (323 aa).

The region spanning 121–317 (RIWFLTNNIN…FTNLIEEIIK (197 aa)) is the ATP-grasp domain. 147–199 (PMKRPYVIKPLAQGSSIGVEVIFAEDDFNFADYDFPYGDQVIIEQYIKGQGRE) serves as a coordination point for ATP. Residues Glu270, Glu284, and Asn286 each contribute to the Mg(2+) site.

It belongs to the D-alanine--D-alanine ligase family. Mg(2+) serves as cofactor. It depends on Mn(2+) as a cofactor.

The protein localises to the cytoplasm. The catalysed reaction is 2 D-alanine + ATP = D-alanyl-D-alanine + ADP + phosphate + H(+). It functions in the pathway cell wall biogenesis; peptidoglycan biosynthesis. Cell wall formation. This is D-alanine--D-alanine ligase from Rickettsia peacockii (strain Rustic).